A 416-amino-acid chain; its full sequence is Cyclin-dependent kinase 8 (416 aa).

An interaction with CCNC region spans residues 1–15; it reads MDYDFKVKLTGERER. Residues 21 to 287 form the Protein kinase domain; that stretch reads EYEGCKVGRG…SEQAMQDPYF (267 aa). Residues 27-35 and Lys52 each bind ATP; that span reads VGRGTYGHV. Asp151 (proton acceptor) is an active-site residue. The disordered stretch occupies residues 313-416; sequence EEEPDDKGDK…PQYSHQTHRY (104 aa). Residues 325 to 343 are compositionally biased toward low complexity; it reads QQQQQGNNHTNGTGHPGNQ. Composition is skewed to polar residues over residues 361–378 and 386–416; these read PTTTSGGLIMTSDYQRSN and PGPSTSQPQSSMGYTSTSQQPPQYSHQTHRY.

It belongs to the protein kinase superfamily. CMGC Ser/Thr protein kinase family. CDC2/CDKX subfamily. Component of the Mediator complex. Interacts with ccnc. The cofactor is Mg(2+).

The protein localises to the nucleus. It carries out the reaction L-seryl-[protein] + ATP = O-phospho-L-seryl-[protein] + ADP + H(+). The enzyme catalyses L-threonyl-[protein] + ATP = O-phospho-L-threonyl-[protein] + ADP + H(+). It catalyses the reaction [DNA-directed RNA polymerase] + ATP = phospho-[DNA-directed RNA polymerase] + ADP + H(+). In terms of biological role, component of the Mediator complex, a coactivator involved in regulated gene transcription of nearly all RNA polymerase II-dependent genes. Mediator functions as a bridge to convey information from gene-specific regulatory proteins to the basal RNA polymerase II transcription machinery. Mediator is recruited to promoters by direct interactions with regulatory proteins and serves as a scaffold for the assembly of a functional pre-initiation complex with RNA polymerase II and the general transcription factors. Phosphorylates the CTD (C-terminal domain) of the large subunit of RNA polymerase II (RNAp II), which may inhibit the formation of a transcription initiation complex. This is Cyclin-dependent kinase 8 (cdk8) from Xenopus laevis (African clawed frog).